The sequence spans 7094 residues: Replicase polyprotein 1ab (7094 aa).

One can recognise a CoV Nsp1 globular domain in the interval 54–196 (PENHVMVDCR…PWVMYLRKCG (143 aa)). The BetaCoV Nsp1 C-terminal domain maps to 216-246 (FKVEDAYDLVHDEPKGKFSKKAYALIRGYRG). A CoV Nsp2 N-terminal domain is found at 250-519 (LLYVDQYGCD…LICKALYLDY (270 aa)). Zn(2+) contacts are provided by C392, C397, C413, and C416. The interval 392 to 416 (CEQDLCDFKGWVPGNMIDGFACTTC) is C4. Residues 524 to 713 (CGNLHQRELL…AQAFRSVAKV (190 aa)) form the CoV Nsp2 middle domain. Residues 733–851 (RRRICLSGSK…LDQAWRVPCA (119 aa)) enclose the CoV Nsp2 C-terminal domain. The Ubiquitin-like 1 domain maps to 853 to 966 (RRVTFKEQPT…LYCAFTAPED (114 aa)). A Peptidase C16 1 domain is found at 1036-1274 (DLESVIQDYE…IAQLYGSCIT (239 aa)). C1074 serves as the catalytic For PL1-PRO activity. Zn(2+) contacts are provided by C1151, C1154, C1177, and C1179. A C4-type 1 zinc finger spans residues 1151–1179 (CIKCDLALKLKGLDAMFFYGDVVSHVCKC). Residues H1225 and D1236 each act as for PL1-PRO activity in the active site. Residues 1275-1435 (PNVCFVKGDI…LISKCQITAV (161 aa)) enclose the Macro domain. Positions 1491-1563 (DDARTFVQSN…VAQIKALFLD (73 aa)) constitute a DPUP domain. The Ubiquitin-like 2 domain occupies 1562 to 1617 (LDKVDILLTVDGVNFTNRFVPVGESFGKSLGNVFCDGVNVTKHKCDINYKGKVFFQ). The Peptidase C16 2 domain occupies 1631 to 1892 (SSFNFDQKEL…KIEYNPDLSQ (262 aa)). C1671 (for PL2-PRO activity) is an active-site residue. Zn(2+) is bound by residues C1749, C1751, C1783, and C1785. The C4-type 2 zinc finger occupies 1749–1785 (CKCGVKQEQRTGVDAVMHFGTLSREDLEIGYTVDCSC). Catalysis depends on for PL2-PRO activity residues H1828 and D1842. The Nucleic acid-binding domain maps to 1906 to 2007 (IKAQFKTFEK…TYFNRPLLVD (102 aa)). Residues 2020–2169 (DDGGDISESD…ADNKVIYTTE (150 aa)) enclose the G2M domain. Helical transmembrane passes span 2138–2158 (ISAC…WIKI), 2199–2219 (ACII…NVIF), and 2227–2247 (IGFL…TFSL). An HD1 region spans residues 2138 to 2385 (ISACFNFIKW…ASFIKLFILF (248 aa)). A 3Ecto domain is found at 2235 to 2296 (GKIAQWIKST…AIDVVQYEAD (62 aa)). Disulfide bonds link C2251–C2275 and C2266–C2272. The next 3 helical transmembrane spans lie at 2313–2333 (LIVS…LISI), 2343–2363 (LFML…ANML), and 2365–2385 (AHVF…FILF). A Y1 region spans residues 2383-2473 (ILFRHVAYGC…ELKRPIQPTD (91 aa)). The 368-residue stretch at 2383–2750 (ILFRHVAYGC…LTTPFSLKGG (368 aa)) folds into the CoV Nsp3 Y domain. H2387, C2392, C2397, C2400, C2433, H2436, C2440, and C2443 together coordinate Zn(2+). Positions 2387–2400 (HVAYGCSKPGCLFC) are ZF1. The tract at residues 2433–2443 (CSKHQWNCIDC) is ZF2. Residues 2474–2566 (VAYHTVTDVK…MVDKNLITTA (93 aa)) form a Y2 region. The interval 2474 to 2750 (VAYHTVTDVK…LTTPFSLKGG (277 aa)) is coV-Y. The Y3 stretch occupies residues 2567-2649 (NTGTSVTETM…DSVMSAVSAG (83 aa)). The Y4 stretch occupies residues 2650–2750 (LELTDESCNN…LTTPFSLKGG (101 aa)). 7 helical membrane-spanning segments follow: residues 2752 to 2772 (VFSY…IGLW), 2824 to 2844 (STFG…VAVV), 3009 to 3029 (VFDL…FLAL), 3031 to 3051 (ASSI…YYLI), 3063 to 3083 (IVFV…VFQV), 3090 to 3110 (VYAI…SVIM), and 3115 to 3135 (LVMY…SVVV). The segment at 2752-3135 (VFSYFVYVCF…FCLLYISVVV (384 aa)) is HD2. One can recognise a Nsp4C domain in the interval 3149–3246 (LGTSVRSDGT…TASVSTSFLQ (98 aa)). Residues 3247–3549 (SGIVKMVNPT…YQQLAGIKLQ (303 aa)) enclose the Peptidase C30 domain. Catalysis depends on for 3CL-PRO activity residues H3287 and C3391. The next 7 membrane-spanning stretches (helical) occupy residues 3558-3578 (GIVC…TAFV), 3588-3608 (TNML…MLLV), 3614-3634 (YLTM…YLVV), 3657-3677 (TYTD…FVTL), 3684-3704 (LFSF…WYMG), 3711-3731 (ILLM…LSMA), and 3755-3775 (IVLV…GLFS). An HD3 region spans residues 3558–3775 (GIVCWIMAST…IISCYWGLFS (218 aa)). The RdRp Nsp7 cofactor domain occupies 3837–3925 (SKLTDVKCAN…DYAKDNTVLQ (89 aa)). The 197-residue stretch at 3926 to 4122 (ALQSEFVNMA…HNEVSATVLQ (197 aa)) folds into the RdRp Nsp8 cofactor domain. Residues 4123–4232 (NNELMPAKLK…GTISSTVRLQ (110 aa)) form the Nsp9 ssRNA-binding domain. The ExoN/MTase coactivator domain occupies 4233–4370 (AGTATEYASN…CVSTDTTVQS (138 aa)). Zn(2+)-binding residues include C4306, C4309, H4315, C4322, C4348, C4351, C4359, and C4361. 2 zinc fingers span residues 4306–4322 (CIYC…DGLC) and 4348–4361 (CQVC…SCSC). The 256-residue stretch at 4375 to 4630 (FLNRVRGTSV…DCELYVNNAY (256 aa)) folds into the NiRAN domain. Positions 4578 and 4587 each coordinate Mn(2+). Residues 4631–4729 (RLFDLVQYDF…MNMDVDTHRY (99 aa)) form the Nsp12 Interface domain. H4660, C4666, C4671, C4675, and C4852 together coordinate Zn(2+). The region spanning 4730–5297 (RLSLKDLLLY…NMYLRSAVMQ (568 aa)) is the Nsp12 RNA-dependent RNA polymerase domain. Residues 4732-4946 (SLKDLLLYAA…HQKCLKSIAA (215 aa)) are rdRp Fingers N-ter. Residues 4947-4985 (TRGVPVVIGTTKFYGGWDDMLRRLIKDVDNPVLMGWDYP) form a rdRp Palm N-ter region. Positions 4977 to 5139 (PVLMGWDYPK…CYNSDYASKG (163 aa)) constitute a RdRp catalytic domain. Residues 4986 to 5044 (KCDRAMPNILRIVSSLVLARKHEACCSQSDRFYRLANECAQVLSEIVMCGGCYYVKPGG) form a rdRp Fingers C-ter region. Residues H5007, C5010, and C5011 each coordinate Zn(2+). Residues 5045–5180 (TSSGDATTAF…NNGPHEFCSQ (136 aa)) are rdRp Palm C-ter. Catalysis depends on residues S5124, D5125, and D5126. The interval 5181 to 5297 (HTMLVKMDGD…NMYLRSAVMQ (117 aa)) is rdRp Thumb. One can recognise a CV ZBD domain in the interval 5298-5410 (SVGACVVCSS…DDFNRIASCK (113 aa)). Zn(2+)-binding residues include C5302, C5305, C5313, C5316, C5323, C5326, H5330, H5336, C5347, C5352, C5369, and H5372. The (+)RNA virus helicase ATP-binding domain maps to 5553-5734 (SVLETFQNNV…MCCLGPDIFL (182 aa)). Residue 5578-5585 (GPPGTGKS) coordinates ATP. Positions 5735–5904 (GTCYRCPKEI…VETRVQCSTN (170 aa)) constitute a (+)RNA virus helicase C-terminal domain. The 216-residue stretch at 5971 to 6186 (LFITKEEAVK…RCLAVYDCFC (216 aa)) folds into the ExoN domain. Active-site residues include D5989, E5991, and E6090. The Zn(2+) site is built by C6106, C6109, C6125, H6128, H6156, C6160, and H6163. Catalysis depends on residues H6167 and D6172. C6178 lines the Zn(2+) pocket. Residues 6195–6421 (YPIISNELSI…NLWNTFTKLQ (227 aa)) enclose the N7-MTase domain. S-adenosyl-L-methionine is bound at residue 6230–6236 (DIGNPKA). The segment at 6308–6322 (CNGGSLYVNKHAFHT) is gpppA-binding. Zn(2+) contacts are provided by C6346, C6367, C6378, and H6381. Residues 6422-6482 (SLENVVYNLV…NVAVELFAKR (61 aa)) enclose the Nsp15 N-terminal oligomerization domain. Residues 6483–6603 (SIRHHPELKL…FAVRKEGQDV (121 aa)) enclose the AV-Nsp11N/CoV-Nsp15M domain. Residues 6653 to 6792 (TCRTDMEKDF…NDEKVMTFYP (140 aa)) enclose the NendoU domain. Catalysis depends on residues H6683, H6698, K6738, K6841, D6925, K6965, and E6998. The 295-residue stretch at 6797–7091 (ASDWKPGYSM…KEVFVGDSLV (295 aa)) folds into the Nidovirus-type SAM-dependent 2'-O-MTase domain.

This sequence belongs to the coronaviruses polyprotein 1ab family. As to quaternary structure, interacts with host PHB and PHB2. Interacts with papain-like protease nsp3 and non-structural protein 6. In terms of assembly, monomer. Homodimer. Only the homodimer shows catalytic activity. As to quaternary structure, interacts with nsp8 and nsp12 to form the replication-transcription complex (RTC): nsp12, nsp7, two subunits of nsp8, and up to two subunits of nsp13. Interacts with nsp7, nsp13 and nsp12 to form the replication-transcription complex (RTC): nsp12, nsp7, two subunits of nsp8, and up to two subunits of nsp13. In terms of assembly, interacts with nsp12. As to quaternary structure, interacts with proofreading exoribonuclease nsp14 and 2'-O-methyltransferase nsp16; these interactions enhance nsp14 and nsp16 enzymatic activities. Interacts with nsp7 and nsp8 to form the replication-transcription complex (RTC): nsp12, nsp7, two subunits of nsp8, and up to two subunits of nsp13. Interacts with nsp9. In terms of assembly, interacts with nsp8 to form the replication-transcription complex (RTC): nsp12, nsp7, two subunits of nsp8, and up to two subunits of nsp13. Mn(2+) is required as a cofactor. Requires Mg(2+) as cofactor. Specific enzymatic cleavages in vivo by its own proteases yield mature proteins. 3CL-PRO and PL-PRO proteinases are autocatalytically processed.

Its subcellular location is the host membrane. The protein localises to the host cytoplasm. It localises to the host perinuclear region. The protein resides in the host endoplasmic reticulum-Golgi intermediate compartment. The enzyme catalyses RNA(n) + a ribonucleoside 5'-triphosphate = RNA(n+1) + diphosphate. The catalysed reaction is ATP + H2O = ADP + phosphate + H(+). It carries out the reaction Thiol-dependent hydrolysis of ester, thioester, amide, peptide and isopeptide bonds formed by the C-terminal Gly of ubiquitin (a 76-residue protein attached to proteins as an intracellular targeting signal).. It catalyses the reaction a 5'-end (N(7)-methyl 5'-triphosphoguanosine)-ribonucleoside in mRNA + S-adenosyl-L-methionine = a 5'-end (N(7)-methyl 5'-triphosphoguanosine)-(2'-O-methyl-ribonucleoside) in mRNA + S-adenosyl-L-homocysteine + H(+). The enzyme catalyses uridylyl-uridylyl-ribonucleotide-RNA = a 3'-end uridylyl-2',3'-cyclophospho-uridine-RNA + a 5'-end dephospho-ribonucleoside-RNA. The catalysed reaction is a 5'-end diphospho-ribonucleoside in mRNA + GTP + H(+) = a 5'-end (5'-triphosphoguanosine)-ribonucleoside in mRNA + diphosphate. It carries out the reaction a 5'-end (5'-triphosphoguanosine)-ribonucleoside in mRNA + S-adenosyl-L-methionine = a 5'-end (N(7)-methyl 5'-triphosphoguanosine)-ribonucleoside in mRNA + S-adenosyl-L-homocysteine. Its function is as follows. The replicase polyprotein of coronaviruses is a multifunctional protein: it contains the activities necessary for the transcription of negative stranded RNA, leader RNA, subgenomic mRNAs and progeny virion RNA as well as proteinases responsible for the cleavage of the polyprotein into functional products. Inhibits host translation by interacting with the 40S ribosomal subunit. The nsp1-40S ribosome complex further induces an endonucleolytic cleavage near the 5'UTR of host mRNAs, targeting them for degradation. Viral mRNAs are not susceptible to nsp1-mediated endonucleolytic RNA cleavage thanks to the presence of a 5'-end leader sequence and are therefore protected from degradation. By suppressing host gene expression, nsp1 facilitates efficient viral gene expression in infected cells and evasion from host immune response. Functionally, may play a role in the modulation of host cell survival signaling pathway by interacting with host PHB and PHB2. Indeed, these two proteins play a role in maintaining the functional integrity of the mitochondria and protecting cells from various stresses. In terms of biological role, responsible for the cleavages located at the N-terminus of the replicase polyprotein. In addition, PL-PRO possesses a deubiquitinating/deISGylating activity and processes both 'Lys-48'- and 'Lys-63'-linked polyubiquitin chains from cellular substrates. Participates together with nsp4 in the assembly of virally-induced cytoplasmic double-membrane vesicles necessary for viral replication. Antagonizes innate immune induction of type I interferon by blocking the phosphorylation, dimerization and subsequent nuclear translocation of host IRF3. Also prevents host NF-kappa-B signaling. Its function is as follows. Participates in the assembly of virally-induced cytoplasmic double-membrane vesicles necessary for viral replication. Cleaves the C-terminus of replicase polyprotein at 11 sites. Recognizes substrates containing the core sequence [ILMVF]-Q-|-[SGACN]. Also able to bind an ADP-ribose-1''-phosphate (ADRP). Functionally, plays a role in the initial induction of autophagosomes from host endoplasmic reticulum. Later, limits the expansion of these phagosomes that are no longer able to deliver viral components to lysosomes. In terms of biological role, forms a hexadecamer with nsp8 (8 subunits of each) that may participate in viral replication by acting as a primase. Alternatively, may synthesize substantially longer products than oligonucleotide primers. Its function is as follows. Forms a hexadecamer with nsp7 (8 subunits of each) that may participate in viral replication by acting as a primase. Alternatively, may synthesize substantially longer products than oligonucleotide primers. Forms a primer, NSP9-pU, which is utilized by the polymerase for the initiation of RNA chains. Interacts with ribosome signal recognition particle RNA (SRP). Together with NSP8, suppress protein integration into the cell membrane, thereby disrupting host immune defenses. Functionally, plays a pivotal role in viral transcription by stimulating both nsp14 3'-5' exoribonuclease and nsp16 2'-O-methyltransferase activities. Therefore plays an essential role in viral mRNAs cap methylation. In terms of biological role, RNA-directed RNA polymerase that catalyzes the transcription of viral genomic and subgenomic RNAs. Acts in complex with nsp7 and nsp8 to transcribe both the minus and positive strands of genomic RNA. The kinase-like NiRAN domain of NSP12 attaches one or more nucleotides to the amino terminus of NSP9, forming a covalent RNA-protein intermediate that serves as transcription/replication primer. Subgenomic RNAs (sgRNAs) are formed by discontinuous transcription: The polymerase has the ability to pause at transcription-regulating sequences (TRS) and jump to the leader TRS, resulting in a major deletion. This creates a series of subgenomic RNAs that are replicated, transcribed and translated. In addition, Nsp12 is a subunit of the viral RNA capping enzyme that catalyzes the RNA guanylyltransferase reaction for genomic and sub-genomic RNAs. Subsequently, the NiRAN domain transfers RNA to GDP, and forms the core cap structure GpppA-RNA. Its function is as follows. Multi-functional protein with a zinc-binding domain in N-terminus displaying RNA and DNA duplex-unwinding activities with 5' to 3' polarity. Activity of helicase is dependent on magnesium. Plays a role in viral RNA synthesis through two distinct activities. The N7-guanine methyltransferase activity plays a role in the formation of the cap structure GpppA-RNA. The proofreading exoribonuclease reduces the sensitivity of the virus to RNA mutagens during replication. This activity acts on both ssRNA and dsRNA in a 3'-5' direction. Functionally, plays a role in viral transcription/replication and prevents the simultaneous activation of host cell dsRNA sensors, such as MDA5/IFIH1, OAS, and PKR. Acts by degrading the 5'-polyuridines generated during replication of the poly(A) region of viral genomic and subgenomic RNAs. Catalyzes a two-step reaction in which a 2'3'-cyclic phosphate (2'3'-cP) is first generated by 2'-O transesterification, which is then hydrolyzed to a 3'-phosphate (3'-P). If not degraded, poly(U) RNA would hybridize with poly(A) RNA tails and activate host dsRNA sensors. In terms of biological role, methyltransferase that mediates mRNA cap 2'-O-ribose methylation to the 5'-cap structure of viral mRNAs. N7-methyl guanosine cap is a prerequisite for binding of nsp16. Therefore plays an essential role in viral mRNAs cap methylation which is essential to evade immune system. This is Replicase polyprotein 1ab (rep) from Bos taurus (Bovine).